Reading from the N-terminus, the 172-residue chain is uncharacterized protein (172 aa).

4 consecutive transmembrane segments (helical) span residues 1–21, 41–61, 72–92, and 136–156; these read MLFINITFACILAIRFYSLSI, NSTLLSIAHVAFYFAAIIEAN, QIGLAILIFAIAMLFYVIYEL, and FCQAKYTALVGLPIYLLILAV.

The protein resides in the cell membrane. This is an uncharacterized protein from Haemophilus influenzae (strain ATCC 51907 / DSM 11121 / KW20 / Rd).